A 74-amino-acid polypeptide reads, in one-letter code: Large ribosomal subunit protein uL29 (74 aa).

Belongs to the universal ribosomal protein uL29 family.

This Streptomyces griseus subsp. griseus (strain JCM 4626 / CBS 651.72 / NBRC 13350 / KCC S-0626 / ISP 5235) protein is Large ribosomal subunit protein uL29.